Consider the following 1300-residue polypeptide: DNA-directed RNA polymerase subunit beta (1300 aa).

It belongs to the RNA polymerase beta chain family. As to quaternary structure, the RNAP catalytic core consists of 2 alpha, 1 beta, 1 beta' and 1 omega subunit. When a sigma factor is associated with the core the holoenzyme is formed, which can initiate transcription.

The enzyme catalyses RNA(n) + a ribonucleoside 5'-triphosphate = RNA(n+1) + diphosphate. Its function is as follows. DNA-dependent RNA polymerase catalyzes the transcription of DNA into RNA using the four ribonucleoside triphosphates as substrates. This is DNA-directed RNA polymerase subunit beta from Chlorobium chlorochromatii (strain CaD3).